The sequence spans 237 residues: Ribonuclease PH (237 aa).

Residues Arg-86 and 124-126 (GTR) each bind phosphate.

The protein belongs to the RNase PH family. Homohexameric ring arranged as a trimer of dimers.

It carries out the reaction tRNA(n+1) + phosphate = tRNA(n) + a ribonucleoside 5'-diphosphate. In terms of biological role, phosphorolytic 3'-5' exoribonuclease that plays an important role in tRNA 3'-end maturation. Removes nucleotide residues following the 3'-CCA terminus of tRNAs; can also add nucleotides to the ends of RNA molecules by using nucleoside diphosphates as substrates, but this may not be physiologically important. Probably plays a role in initiation of 16S rRNA degradation (leading to ribosome degradation) during starvation. This chain is Ribonuclease PH, found in Shewanella woodyi (strain ATCC 51908 / MS32).